The following is a 467-amino-acid chain: Dihydroorotase (467 aa).

H60 and H62 together coordinate Zn(2+). Substrate is bound by residues 62-64 (HFR) and N94. Zn(2+)-binding residues include E146, H180, H234, and D313. D313 is a catalytic residue. Residue H317 coordinates substrate. The segment at 439–467 (KPGRGEFLEGSGKRSEEDEEENSEETGSD) is disordered. The span at 441–454 (GRGEFLEGSGKRSE) shows a compositional bias: basic and acidic residues. A compositionally biased stretch (acidic residues) spans 455–467 (EDEEENSEETGSD).

It belongs to the metallo-dependent hydrolases superfamily. DHOase family. Class I DHOase subfamily. Zn(2+) serves as cofactor.

It catalyses the reaction (S)-dihydroorotate + H2O = N-carbamoyl-L-aspartate + H(+). It participates in pyrimidine metabolism; UMP biosynthesis via de novo pathway; (S)-dihydroorotate from bicarbonate: step 3/3. In terms of biological role, catalyzes the reversible cyclization of carbamoyl aspartate to dihydroorotate. In Methanosarcina acetivorans (strain ATCC 35395 / DSM 2834 / JCM 12185 / C2A), this protein is Dihydroorotase.